Reading from the N-terminus, the 117-residue chain is Bomanin Bicipital 1 (117 aa).

Positions 1–20 are cleaved as a signal peptide; the sequence is MKCLILSFAIFVVLASQATA. Intrachain disulfides connect C29/C32 and C107/C110.

It belongs to the bomanin family. In terms of tissue distribution, hemolymph (at protein level).

The protein resides in the secreted. In terms of biological role, secreted immune-induced peptide induced by Toll signaling. Has a role in resistance to bacterial and fungal infections. This is Bomanin Bicipital 1 from Drosophila melanogaster (Fruit fly).